A 360-amino-acid chain; its full sequence is Glycerol-1-phosphate dehydrogenase [NAD(P)+] (360 aa).

NAD(+) is bound by residues 108–112 (GRVID) and 130–133 (TAAS). Aspartate 135 serves as a coordination point for substrate. Serine 139 lines the NAD(+) pocket. Substrate is bound at residue aspartate 182. Zn(2+) contacts are provided by aspartate 182 and histidine 262. A substrate-binding site is contributed by histidine 266. Position 278 (histidine 278) interacts with Zn(2+).

Belongs to the glycerol-1-phosphate dehydrogenase family. Requires Zn(2+) as cofactor.

The protein resides in the cytoplasm. It carries out the reaction sn-glycerol 1-phosphate + NAD(+) = dihydroxyacetone phosphate + NADH + H(+). The catalysed reaction is sn-glycerol 1-phosphate + NADP(+) = dihydroxyacetone phosphate + NADPH + H(+). It functions in the pathway membrane lipid metabolism; glycerophospholipid metabolism. Functionally, catalyzes the NAD(P)H-dependent reduction of dihydroxyacetonephosphate (DHAP or glycerone phosphate) to glycerol 1-phosphate (G1P). The G1P thus generated is used as the glycerophosphate backbone of phospholipids in the cellular membranes of Archaea. This Methanocorpusculum labreanum (strain ATCC 43576 / DSM 4855 / Z) protein is Glycerol-1-phosphate dehydrogenase [NAD(P)+].